The primary structure comprises 332 residues: MSELTGGIIECILKIIVVLLIFSALAGFGTYLERKVLGFFQRRIGPNYVGPYGLLQVVADGIKLFAKEDIIPQNAIKPIFILAPSIAAITAFIAMAPIPFFPEFEIFGYVVRPIIADINVGILFVLAVSSCGIYAPLLAGLSSGNKWSLIGGARAAIQFLSFEVITILSLLAPLMIIESLSLIDINNYQQGSMLDWLIFKQPLAFGLFIIAAYVELNRTPFDLLEHEAELTAGFATEYSGLKWGMFFIGEYANMFATAFILSLVFCGGFNDWGFIPGGIAILLKVCFFIFLFMWVRATFPHVRPDQLMRMCWKIMLPLALLNVLITGCILLF.

9 helical membrane-spanning segments follow: residues 8–28, 44–66, 78–98, 120–140, 157–177, 196–216, 245–265, 274–294, and 312–332; these read IIEC…LAGF, IGPN…KLFA, PIFI…MAPI, VGIL…LLAG, IQFL…LMII, WLIF…YVEL, MFFI…SLVF, FIPG…LFMW, and WKIM…ILLF.

The protein belongs to the complex I subunit 1 family. NDH-1 is composed of 14 different subunits. Subunits NuoA, H, J, K, L, M, N constitute the membrane sector of the complex.

It localises to the cell inner membrane. It carries out the reaction a quinone + NADH + 5 H(+)(in) = a quinol + NAD(+) + 4 H(+)(out). In terms of biological role, NDH-1 shuttles electrons from NADH, via FMN and iron-sulfur (Fe-S) centers, to quinones in the respiratory chain. The immediate electron acceptor for the enzyme in this species is believed to be ubiquinone. Couples the redox reaction to proton translocation (for every two electrons transferred, four hydrogen ions are translocated across the cytoplasmic membrane), and thus conserves the redox energy in a proton gradient. This subunit may bind ubiquinone. This is NADH-quinone oxidoreductase subunit H from Helicobacter hepaticus (strain ATCC 51449 / 3B1).